The primary structure comprises 81 residues: Photosystem I iron-sulfur center (81 aa).

2 4Fe-4S ferredoxin-type domains span residues 2–31 (SHTVKIYDTCIGCTQCVRACPTDVLEMVPW) and 37–68 (GQIASSPRVEDCVGCKRCETACPTDFLSVRVY). Residues cysteine 11, cysteine 14, cysteine 17, cysteine 21, cysteine 48, cysteine 51, cysteine 54, and cysteine 58 each contribute to the [4Fe-4S] cluster site.

As to quaternary structure, the eukaryotic PSI reaction center is composed of at least 11 subunits. Requires [4Fe-4S] cluster as cofactor.

It is found in the plastid. It localises to the chloroplast thylakoid membrane. It catalyses the reaction reduced [plastocyanin] + hnu + oxidized [2Fe-2S]-[ferredoxin] = oxidized [plastocyanin] + reduced [2Fe-2S]-[ferredoxin]. In terms of biological role, apoprotein for the two 4Fe-4S centers FA and FB of photosystem I (PSI); essential for photochemical activity. FB is the terminal electron acceptor of PSI, donating electrons to ferredoxin. The C-terminus interacts with PsaA/B/D and helps assemble the protein into the PSI complex. Required for binding of PsaD and PsaE to PSI. PSI is a plastocyanin/cytochrome c6-ferredoxin oxidoreductase, converting photonic excitation into a charge separation, which transfers an electron from the donor P700 chlorophyll pair to the spectroscopically characterized acceptors A0, A1, FX, FA and FB in turn. This Phaeodactylum tricornutum (strain CCAP 1055/1) protein is Photosystem I iron-sulfur center.